A 415-amino-acid chain; its full sequence is T-cell-specific guanine nucleotide triphosphate-binding protein 1 (415 aa).

The IRG-type G domain occupies 55–237 (APLHIAVTGE…PKLETKLLQD (183 aa)). 4 residues coordinate GDP: glycine 66, glycine 68, lysine 69, and serine 70. (Microbial infection) Phosphothreonine; by ROP17 is present on threonine 89. GDP-binding residues include glycine 90, lysine 171, aspartate 173, and asparagine 219.

It belongs to the TRAFAC class dynamin-like GTPase superfamily. IRG family. Monomer, homodimer or homotetramer in the presence of GTP. Forms higher order homooligomers in GTP-dependent manner. As to quaternary structure, (Microbial infection) Interacts with Toxoplasma gondii ROP18. Post-translationally, (Microbial infection) Phosphorylated by Toxoplasma gondii ROP17; the phosphorylation leads to disassembly of IRGB6 (TGTP1/TGTP2) polymers into monomers and dimers. Phosphorylated by Toxoplasma gondii ROP18. As to expression, expressed in thymus and lymph nodes, predominantly T-cells. Not expressed by immature CD4(+) CD8(+) thymocytes (at protein level). Expressed in IFNG-stimulated macrophages. Expressed at low levels in unstimulated astrocytes. Due to sequence similarity with Tgtp2, it is impossible to assign unambiguously experimental data published in the literature to Tgtp1 or Tgtp2 gene.

It is found in the cytoplasm. The protein resides in the endoplasmic reticulum. Its subcellular location is the golgi apparatus. It localises to the parasitophorous vacuole membrane. The catalysed reaction is GTP + H2O = GDP + phosphate + H(+). Its function is as follows. Involved in innate cell-autonomous resistance to intracellular pathogens, such as Toxoplasma gondii. During avirulent type II T.gondii infection, recruited to the parasitophorous vacuole (PV) membrane, leading to PV vesiculation and rupture, and subsequent digestion of the parasite within the cytosol. Not recruited to virulent type I T.gondii PV membrane. May confer an antiviral state for vesicular stomatitis virus. The chain is T-cell-specific guanine nucleotide triphosphate-binding protein 1 (Tgtp1) from Mus musculus (Mouse).